The chain runs to 155 residues: Probable calcium-binding protein CML9 (155 aa).

3 consecutive EF-hand domains span residues 8-43 (EQVDECREIFDLFDSDEDGRIAAGELVTALRSLGQN), 86-121 (ATEKELAACLDVFDDARSGVIPAEQLRQAMVSHGDR), and 122-155 (LTEEEADEMVRKADPAGEGRVEYKEFVKVLMNNK). Ca(2+) contacts are provided by Asp-21, Asp-23, Asp-25, Arg-27, and Glu-32.

Potential calcium sensor. This Oryza sativa subsp. japonica (Rice) protein is Probable calcium-binding protein CML9 (CML9).